The sequence spans 314 residues: tRNA uridine(34) hydroxylase (314 aa).

One can recognise a Rhodanese domain in the interval 140–234; it reads ARDDVILIDT…YLEETPPDES (95 aa). Cysteine 194 acts as the Cysteine persulfide intermediate in catalysis.

This sequence belongs to the TrhO family.

It catalyses the reaction uridine(34) in tRNA + AH2 + O2 = 5-hydroxyuridine(34) in tRNA + A + H2O. Functionally, catalyzes oxygen-dependent 5-hydroxyuridine (ho5U) modification at position 34 in tRNAs. The chain is tRNA uridine(34) hydroxylase from Acinetobacter baumannii (strain SDF).